The chain runs to 160 residues: Myosin regulatory light chain, smooth muscle (160 aa).

Serine 1 is modified (blocked amino end (Ser)). Position 11 is a phosphoserine (serine 11). EF-hand domains follow at residues asparagine 20–alanine 55 and aspartate 88–asparagine 123. The Ca(2+) site is built by aspartate 33, asparagine 35, aspartate 37, and aspartate 44.

Its function is as follows. In molluscan muscle, calcium regulation is associated with myosin rather than with actin. Muscle myosin contains two types of light chains: the catalytic light chain, essential for ATPase activity, and the regulatory light chain, a calcium-binding protein responsible for Ca(2+) dependent binding and Ca(2+) dependent Mg-ATPase activity. This Spisula sachalinensis (Sakhalin surf-clam) protein is Myosin regulatory light chain, smooth muscle.